The following is a 116-amino-acid chain: Protein Wnt-5a (116 aa).

Residue serine 1 is the site of O-palmitoleoyl serine; by PORCN attachment. Residues asparagine 69 and asparagine 83 are each glycosylated (N-linked (GlcNAc...) asparagine). Cysteine 82 and cysteine 97 are disulfide-bonded.

It belongs to the Wnt family. Palmitoleoylation is required for efficient binding to frizzled receptors. Depalmitoleoylation leads to Wnt signaling pathway inhibition.

Its subcellular location is the secreted. The protein resides in the extracellular space. It localises to the extracellular matrix. Its function is as follows. Ligand for members of the frizzled family of seven transmembrane receptors. Can activate or inhibit canonical Wnt signaling, depending on receptor context. Required during embryogenesis for extension of the primary anterior-posterior axis. This chain is Protein Wnt-5a (WNT-5A), found in Plestiodon skiltonianus (Western skink).